The following is a 130-amino-acid chain: Cysteine methyltransferase (130 aa).

The catalysed reaction is [trehalose-6-phosphate synthase]-L-cysteine + S-adenosyl-L-methionine = [trehalose-6-phosphate synthase]-S-methyl-L-cysteine + S-adenosyl-L-homocysteine + H(+). S-adenosyl-L-methionine-dependent protein-cysteine S-methyltransferase with broad substrate specificity. Methylates trehalose-6-phosphate synthase (TPS), enhancing its enzymatic activity and promoting trehalose synthesis upon entry of cells into stationary phase. The polypeptide is Cysteine methyltransferase (Saccharomyces cerevisiae (Baker's yeast)).